A 295-amino-acid chain; its full sequence is Bifunctional protein FolD (295 aa).

NADP(+) contacts are provided by residues 166 to 168 (GRS), Ser191, and Ile232.

The protein belongs to the tetrahydrofolate dehydrogenase/cyclohydrolase family. In terms of assembly, homodimer.

The enzyme catalyses (6R)-5,10-methylene-5,6,7,8-tetrahydrofolate + NADP(+) = (6R)-5,10-methenyltetrahydrofolate + NADPH. The catalysed reaction is (6R)-5,10-methenyltetrahydrofolate + H2O = (6R)-10-formyltetrahydrofolate + H(+). It participates in one-carbon metabolism; tetrahydrofolate interconversion. Its function is as follows. Catalyzes the oxidation of 5,10-methylenetetrahydrofolate to 5,10-methenyltetrahydrofolate and then the hydrolysis of 5,10-methenyltetrahydrofolate to 10-formyltetrahydrofolate. This is Bifunctional protein FolD from Rhodopseudomonas palustris (strain BisB18).